A 157-amino-acid polypeptide reads, in one-letter code: Large ribosomal subunit protein bL34c (157 aa).

The transit peptide at 1–97 directs the protein to the chloroplast; it reads MASLSTSVVA…GQRRRGLVVR (97 aa).

It belongs to the bacterial ribosomal protein bL34 family. In terms of assembly, part of the 50S ribosomal subunit.

It localises to the plastid. It is found in the chloroplast. In terms of biological role, this protein binds directly to 23S ribosomal RNA. The polypeptide is Large ribosomal subunit protein bL34c (RPL34) (Arabidopsis thaliana (Mouse-ear cress)).